The chain runs to 304 residues: MPTHAPAPGSGDPLGLHGVVPPVVTAFDADESLDADTTADHARMVVDAGVHGVFPLGTNGEFPLLTPSERDRVVTAVVDEVGGEVPVIAGVGAPSTRQTVAHAEHAASVGADGVVVVTPFYYPLDGTAAVEHYRRVAAAVDCPVYVYHIPSKTGNELSLETLAALAEIDTLAGVKDSSKDVPWLGQAVDAHPELTFLAGSDSLLAPGLDVGCAGLVSAVANVAPELVVGLYEAYDEGDRERARARQSTVYEVRAALKRGPYMAGVKAALGLRGFDAGPLRSPLRGLDDDDRAALEADLADLGLL.

Residues Thr-58 and Tyr-121 each act as charge relay system in the active site. Residue Tyr-147 is the Proton donor of the active site. Lys-175 serves as the catalytic Schiff-base intermediate with substrate.

This sequence belongs to the DapA family. Homotetramer.

The protein localises to the cytoplasm. This is an uncharacterized protein from Halobacterium salinarum (strain ATCC 29341 / DSM 671 / R1).